The chain runs to 72 residues: Translation initiation factor IF-1 1 (72 aa).

Residues 1-72 (MSKEDVIQMQ…TKGRIVFRAK (72 aa)) enclose the S1-like domain.

It belongs to the IF-1 family. As to quaternary structure, component of the 30S ribosomal translation pre-initiation complex which assembles on the 30S ribosome in the order IF-2 and IF-3, IF-1 and N-formylmethionyl-tRNA(fMet); mRNA recruitment can occur at any time during PIC assembly.

The protein resides in the cytoplasm. Its function is as follows. One of the essential components for the initiation of protein synthesis. Stabilizes the binding of IF-2 and IF-3 on the 30S subunit to which N-formylmethionyl-tRNA(fMet) subsequently binds. Helps modulate mRNA selection, yielding the 30S pre-initiation complex (PIC). Upon addition of the 50S ribosomal subunit IF-1, IF-2 and IF-3 are released leaving the mature 70S translation initiation complex. The polypeptide is Translation initiation factor IF-1 1 (Thiobacillus denitrificans (strain ATCC 25259 / T1)).